Reading from the N-terminus, the 308-residue chain is tRNA dimethylallyltransferase (308 aa).

An ATP-binding site is contributed by 14 to 21; it reads GPTASGKS. 16–21 provides a ligand contact to substrate; the sequence is TASGKS. The tract at residues 39–42 is interaction with substrate tRNA; sequence DSMQ.

This sequence belongs to the IPP transferase family. As to quaternary structure, monomer. Mg(2+) serves as cofactor.

The enzyme catalyses adenosine(37) in tRNA + dimethylallyl diphosphate = N(6)-dimethylallyladenosine(37) in tRNA + diphosphate. In terms of biological role, catalyzes the transfer of a dimethylallyl group onto the adenine at position 37 in tRNAs that read codons beginning with uridine, leading to the formation of N6-(dimethylallyl)adenosine (i(6)A). The polypeptide is tRNA dimethylallyltransferase (Bradyrhizobium sp. (strain ORS 278)).